The sequence spans 382 residues: Probable inactive dehydrogenase easA (382 aa).

Residues 25 to 27 (PMT), A60, Q102, and H171 each bind FMN. Substrate is bound by residues H171 and N174. FMN contacts are provided by residues K223, G299, 324–325 (GR), and R325. Substrate is bound at residue Y352.

It belongs to the NADH:flavin oxidoreductase/NADH oxidase family.

In terms of biological role, probable inactive dehydrogenase; part of the gene cluster that mediates the biosynthesis of fungal ergot alkaloid. DmaW catalyzes the first step of ergot alkaloid biosynthesis by condensing dimethylallyl diphosphate (DMAP) and tryptophan to form 4-dimethylallyl-L-tryptophan. The second step is catalyzed by the methyltransferase easF that methylates 4-dimethylallyl-L-tryptophan in the presence of S-adenosyl-L-methionine, resulting in the formation of 4-dimethylallyl-L-abrine. The catalase easC and the FAD-dependent oxidoreductase easE then transform 4-dimethylallyl-L-abrine to chanoclavine-I which is further oxidized by easD in the presence of NAD(+), resulting in the formation of chanoclavine-I aldehyde. Agroclavine dehydrogenase easG then mediates the conversion of chanoclavine-I aldehyde to agroclavine via a non-enzymatic adduct reaction: the substrate is an iminium intermediate that is formed spontaneously from chanoclavine-I aldehyde in the presence of glutathione. Further conversion of agroclavine to paspalic acid is a two-step process involving oxidation of agroclavine to elymoclavine and of elymoclavine to paspalic acid, the second step being performed by the elymoclavine oxidase cloA. However, cloA does not encode a functional enzyme indicating that C.fusiformis terminates its ergot alkaloid pathway at elymoclavine. This is Probable inactive dehydrogenase easA from Claviceps fusiformis (Ergot fungus).